A 493-amino-acid polypeptide reads, in one-letter code: Chaperone SurA (493 aa).

Residues 1–33 (MKRQAFSLLSRLNPWQQLLLSAVLVTLAAPAAA) form the signal peptide. The interval 46 to 76 (FTQQGSQSASQGSTVAPSQPMMGVPQPSSQP) is disordered. The span at 48–58 (QQGSQSASQGS) shows a compositional bias: low complexity. PpiC domains follow at residues 230 to 332 (PTEF…KLVS) and 346 to 444 (IAQT…QVEN).

It localises to the periplasm. The enzyme catalyses [protein]-peptidylproline (omega=180) = [protein]-peptidylproline (omega=0). Chaperone involved in the correct folding and assembly of outer membrane proteins. Recognizes specific patterns of aromatic residues and the orientation of their side chains, which are found more frequently in integral outer membrane proteins. May act in both early periplasmic and late outer membrane-associated steps of protein maturation. The sequence is that of Chaperone SurA from Cupriavidus metallidurans (strain ATCC 43123 / DSM 2839 / NBRC 102507 / CH34) (Ralstonia metallidurans).